A 278-amino-acid chain; its full sequence is Transmembrane protein 41A-B (278 aa).

The first 23 residues, Met-1–Ala-23, serve as a signal peptide directing secretion. Transmembrane regions (helical) follow at residues Gly-78 to Gly-98, Phe-101 to Thr-121, Leu-164 to Val-184, Ile-191 to Cys-211, and Trp-230 to Ile-250.

This sequence belongs to the TMEM41 family.

The protein resides in the membrane. The protein is Transmembrane protein 41A-B of Danio rerio (Zebrafish).